We begin with the raw amino-acid sequence, 257 residues long: Large ribosomal subunit protein uL2 (257 aa).

A disordered region spans residues 207 to 230 (VEHPFGGGNHQHIGKPSTIRRDAP).

The protein belongs to the universal ribosomal protein uL2 family. In terms of assembly, component of the large ribosomal subunit.

It is found in the cytoplasm. Its function is as follows. Component of the large ribosomal subunit. The ribosome is a large ribonucleoprotein complex responsible for the synthesis of proteins in the cell. This Danio rerio (Zebrafish) protein is Large ribosomal subunit protein uL2 (rpl8).